Reading from the N-terminus, the 416-residue chain is Histidine--tRNA ligase (416 aa).

It belongs to the class-II aminoacyl-tRNA synthetase family.

It is found in the cytoplasm. The catalysed reaction is tRNA(His) + L-histidine + ATP = L-histidyl-tRNA(His) + AMP + diphosphate + H(+). This Methanococcus maripaludis (strain DSM 14266 / JCM 13030 / NBRC 101832 / S2 / LL) protein is Histidine--tRNA ligase.